The following is a 291-amino-acid chain: Verruculogen synthase (291 aa).

Tyr68 is a catalytic residue.

Belongs to the PhyH family. Homodimer. Fe cation is required as a cofactor.

It carries out the reaction fumitremorgin B + 2-oxoglutarate + AH2 + 2 O2 = verruculogen + succinate + A + CO2 + H2O. The protein operates within mycotoxin biosynthesis. Verruculogen synthase; part of the gene cluster that mediates the biosynthesis of fumitremorgins, indole alkaloids that carry not only intriguing chemical structures, but also interesting biological and pharmacological activities. The biosynthesis of fumitremorgin-type alkaloids begins by condensation of the two amino acids L-tryptophan and L-proline to brevianamide F, catalyzed by the non-ribosomal peptide synthetase ftmA. Brevianamide F is then prenylated by the prenyltransferase ftmPT1/ftmB in the presence of dimethylallyl diphosphate, resulting in the formation of tryprostatin B. The three cytochrome P450 monooxygenases, ftmP450-1/ftmC, ftmP450-2/ftmE and ftmP450-3/FtmG, are responsible for the conversion of tryprostatin B to 6-hydroxytryprostatin B, tryprostatin A to fumitremorgin C and fumitremorgin C to 12,13-dihydroxyfumitremorgin C, respectively. The putative methyltransferase ftmMT/ftmD is expected for the conversion of 6-hydroxytryprostatin B to tryprostatin A. FtmPT2/FtmH catalyzes the prenylation of 12,13-dihydroxyfumitre-morgin C in the presence of dimethylallyl diphosphate, resulting in the formation of fumitremorgin B. Fumitremorgin B is further converted to verruculogen by ftmOx1/ftmF via the insertion of an endoperoxide bond between the two prenyl moieties. In some fungal species, verruculogen is further converted to fumitremorgin A, but the enzymes involved in this step have not been identified yet. The polypeptide is Verruculogen synthase (Aspergillus fumigatus (Neosartorya fumigata)).